Here is a 320-residue protein sequence, read N- to C-terminus: ATP-dependent 6-phosphofructokinase (320 aa).

Residue glycine 12 coordinates ATP. 22-26 (RGVVR) contributes to the ADP binding site. ATP contacts are provided by residues 73–74 (RF) and 103–106 (GDGS). Aspartate 104 is a binding site for Mg(2+). 126–128 (TID) contacts substrate. The active-site Proton acceptor is aspartate 128. An ADP-binding site is contributed by arginine 155. Substrate contacts are provided by residues arginine 163 and 170–172 (MGR). Residues 186 to 188 (GCE), lysine 212, and 214 to 216 (KKH) each bind ADP. Substrate is bound by residues glutamate 223, arginine 244, and 250–253 (HIQR).

This sequence belongs to the phosphofructokinase type A (PFKA) family. ATP-dependent PFK group I subfamily. Prokaryotic clade 'B1' sub-subfamily. Homotetramer. The cofactor is Mg(2+).

The protein localises to the cytoplasm. The catalysed reaction is beta-D-fructose 6-phosphate + ATP = beta-D-fructose 1,6-bisphosphate + ADP + H(+). It participates in carbohydrate degradation; glycolysis; D-glyceraldehyde 3-phosphate and glycerone phosphate from D-glucose: step 3/4. Allosterically activated by ADP and other diphosphonucleosides, and allosterically inhibited by phosphoenolpyruvate. Catalyzes the phosphorylation of D-fructose 6-phosphate to fructose 1,6-bisphosphate by ATP, the first committing step of glycolysis. The protein is ATP-dependent 6-phosphofructokinase of Vibrio campbellii (strain ATCC BAA-1116).